A 465-amino-acid chain; its full sequence is Argininosuccinate lyase (465 aa).

It belongs to the lyase 1 family. Argininosuccinate lyase subfamily.

Its subcellular location is the cytoplasm. The enzyme catalyses 2-(N(omega)-L-arginino)succinate = fumarate + L-arginine. It participates in amino-acid biosynthesis; L-arginine biosynthesis; L-arginine from L-ornithine and carbamoyl phosphate: step 3/3. The sequence is that of Argininosuccinate lyase from Rhodopseudomonas palustris (strain HaA2).